The following is a 242-amino-acid chain: Probable ergothioneine transport ATP-binding protein EgtUA (242 aa).

One can recognise an ABC transporter domain in the interval 2–236 (IEYKNVALRY…PATDFVADLF (235 aa)). An ATP-binding site is contributed by 34-41 (GPSGSGKT).

The protein belongs to the ABC transporter superfamily. As to quaternary structure, the complex is probably composed of at least an ATP-binding protein (EgtUA) and a transmembrane protein (EgtUBC).

Its subcellular location is the cell inner membrane. It catalyses the reaction ergothioneine(out) + ATP + H2O = ergothioneine(in) + ADP + phosphate + H(+). Part of an ABC transporter complex EgtU required for the uptake of ergothioneine (EGT), a natural low-molecular weight (LMW) thiol antioxidant. Probably responsible for energy coupling to the transport system. This Streptococcus pneumoniae serotype 2 (strain D39 / NCTC 7466) protein is Probable ergothioneine transport ATP-binding protein EgtUA.